The chain runs to 279 residues: Shikimate dehydrogenase (NADP(+)) (279 aa).

Shikimate contacts are provided by residues 19 to 21 (SRS) and threonine 66. The active-site Proton acceptor is lysine 70. Shikimate contacts are provided by asparagine 91 and aspartate 106. NADP(+) contacts are provided by residues 129-133 (GAGGA), 152-157 (NRTLER), and isoleucine 218. Tyrosine 220 lines the shikimate pocket. Glycine 241 lines the NADP(+) pocket.

This sequence belongs to the shikimate dehydrogenase family. In terms of assembly, homodimer.

It catalyses the reaction shikimate + NADP(+) = 3-dehydroshikimate + NADPH + H(+). It functions in the pathway metabolic intermediate biosynthesis; chorismate biosynthesis; chorismate from D-erythrose 4-phosphate and phosphoenolpyruvate: step 4/7. Its function is as follows. Involved in the biosynthesis of the chorismate, which leads to the biosynthesis of aromatic amino acids. Catalyzes the reversible NADPH linked reduction of 3-dehydroshikimate (DHSA) to yield shikimate (SA). This Gluconobacter oxydans (strain 621H) (Gluconobacter suboxydans) protein is Shikimate dehydrogenase (NADP(+)).